A 323-amino-acid chain; its full sequence is Conjugal transfer protein TrbB (323 aa).

151 to 158 (GGTGSGKT) is a binding site for ATP.

The protein belongs to the GSP E family.

It localises to the cytoplasm. The polypeptide is Conjugal transfer protein TrbB (trbB) (Rhizobium radiobacter (Agrobacterium tumefaciens)).